Reading from the N-terminus, the 120-residue chain is U-scoloptoxin(20)-Cw1a (120 aa).

Positions 1–26 are cleaved as a signal peptide; the sequence is MNSTDRLLGVLLAVVALILLIRISEA. The tract at residues 87–106 is disordered; sequence SSGKSLTTTKDSSESRKKEI. A compositionally biased stretch (basic and acidic residues) spans 97–106; that stretch reads DSSESRKKEI.

It belongs to the scoloptoxin-20 family. In terms of processing, contains 3 disulfide bonds. Expressed by the venom gland.

The protein resides in the secreted. In Cormocephalus westwoodi (Westwood's green centipede), this protein is U-scoloptoxin(20)-Cw1a.